The following is a 430-amino-acid chain: Elongation factor 1-alpha (430 aa).

In terms of domain architecture, tr-type G spans 7–219 (KPHVNIVFIG…DQIPEPEKPV (213 aa)). Positions 16–23 (GHVDHGKS) are G1. 16–23 (GHVDHGKS) is a GTP binding site. Serine 23 contributes to the Mg(2+) binding site. The segment at 70-74 (GITID) is G2. The tract at residues 91–94 (DAPG) is G3. GTP contacts are provided by residues 91–95 (DAPGH) and 146–149 (NKMD). Positions 146–149 (NKMD) are G4. The tract at residues 183-185 (SAW) is G5.

Belongs to the TRAFAC class translation factor GTPase superfamily. Classic translation factor GTPase family. EF-Tu/EF-1A subfamily.

Its subcellular location is the cytoplasm. The enzyme catalyses GTP + H2O = GDP + phosphate + H(+). Functionally, GTP hydrolase that promotes the GTP-dependent binding of aminoacyl-tRNA to the A-site of ribosomes during protein biosynthesis. In Pyrococcus woesei, this protein is Elongation factor 1-alpha.